Reading from the N-terminus, the 383-residue chain is Protein pelota homolog (383 aa).

The protein belongs to the eukaryotic release factor 1 family. Pelota subfamily. As to quaternary structure, component of the Pelota-HBS1L complex, also named Dom34-Hbs1 complex, composed of PELO and HBS1L. The cofactor is a divalent metal cation.

It localises to the cytoplasm. Functionally, component of the Pelota-HBS1L complex, a complex that recognizes stalled ribosomes and triggers the No-Go Decay (NGD) pathway. In the Pelota-HBS1L complex, PELO recognizes ribosomes stalled at the 3' end of an mRNA and engages stalled ribosomes by destabilizing mRNA in the mRNA channel. Following mRNA extraction from stalled ribosomes by the SKI complex, the Pelota-HBS1L complex promotes recruitment of ABCE1, which drives the disassembly of stalled ribosomes, followed by degradation of damaged mRNAs as part of the NGD pathway. The polypeptide is Protein pelota homolog (pelo) (Xenopus laevis (African clawed frog)).